A 355-amino-acid chain; its full sequence is Guanine nucleotide-binding protein G(i) subunit alpha-2 (355 aa).

A lipid anchor (N-myristoyl glycine) is attached at Gly-2. Cys-3 is lipidated: S-palmitoyl cysteine. The 324-residue stretch at 32–355 folds into the G-alpha domain; that stretch reads REVKLLLLGA…KNNLKDCGLF (324 aa). Residues 35–48 form a G1 motif region; the sequence is KLLLLGAGESGKST. Residues 40–47, 176–182, 201–205, 270–273, and Ala-327 each bind GTP; these read GAGESGKS, LRTRVKT, DVGGQ, and NKKD. Ser-47 provides a ligand contact to Mg(2+). Positions 174–182 are G2 motif; that stretch reads DVLRTRVKT. Arg-179 is subject to ADP-ribosylarginine; by cholera toxin. Thr-182 contributes to the Mg(2+) binding site. The interval 197–206 is G3 motif; the sequence is FKMFDVGGQR. Position 205 is a deamidated glutamine; by Photorhabdus PAU_02230 (Gln-205). Positions 266 to 273 are G4 motif; that stretch reads ILFLNKKD. The tract at residues 325–330 is G5 motif; the sequence is TCATDT. Cys-352 is modified (ADP-ribosylcysteine; by pertussis toxin).

Belongs to the G-alpha family. G(i/o/t/z) subfamily. G proteins are composed of 3 units; alpha, beta and gamma. The alpha chain contains the guanine nucleotide binding site. In this context, interacts with GNB2. Interacts with GPSM1. Interacts with RGS12 and RGS14. Interacts with UNC5B. Interacts (inactive GDP-bound form) with NUCB1 (via GBA motif); the interaction leads to activation of GNAI3. Interacts (inactive GDP-bound form) with CCDC88C/DAPLE (via GBA motif). Interacts (inactive GDP-bound form) with CCDC8A/GIV (via GBA motif). Interacts with CXCR1 and CXCR2. (Microbial infection) Deamidated at Gln-205 by Photorhabdus asymbiotica toxin PAU_02230, blocking GTP hydrolysis of heterotrimeric GNAQ or GNA11 and G-alphai (GNAI1, GNAI2 or GNAI3) proteins, thereby activating RhoA.

It is found in the cytoplasm. The protein resides in the cytoskeleton. Its subcellular location is the microtubule organizing center. The protein localises to the centrosome. It localises to the cell membrane. It is found in the membrane. Its function is as follows. Guanine nucleotide-binding proteins (G proteins) are involved as modulators or transducers in various transmembrane signaling systems. The G(i) proteins are involved in hormonal regulation of adenylate cyclase: they inhibit the cyclase in response to beta-adrenergic stimuli. May play a role in cell division. Regulates the cell surface density of dopamine receptors DRD2 by sequestrating them as an intracellular pool. The sequence is that of Guanine nucleotide-binding protein G(i) subunit alpha-2 (GNAI2) from Homo sapiens (Human).